We begin with the raw amino-acid sequence, 27 residues long: Potassium channel toxin alpha-KTx 32.1 (27 aa).

Intrachain disulfides connect C5–C18 and C12–C25.

Expressed by the venom gland.

The protein resides in the secreted. In terms of biological role, blocker of voltage-gated potassium channels. Inhibits voltage-gated potassium channels Kv1.2/KCNA2 (Kd=0.96 nM) and Kv1.3/KCNA3 (Kd=1.3 nM). Does not inhibit Kv1.1/KCNA1, Kv1.5/KCNA5, Kv11.1/KCNH2/ERG1, KCa1.1/KCNMA1, KCa3.1/KCNN4, NaV1.5/SCN5A, NaV1.4/SCN4A or HV1/HVCN1. Strongly inhibits the expression of the activation markers interleukin-2 receptor and CD40 ligand/CD40LG in anti-CD3-activated CD4(+) TEM lymphocytes. The chain is Potassium channel toxin alpha-KTx 32.1 from Centruroides margaritatus (Central American bark Scorpion).